The sequence spans 969 residues: Translation initiation factor IF-2 (969 aa).

The segment at 96–377 (KRDPAEPVRA…NSRNQHQDRR (282 aa)) is disordered. 3 stretches are compositionally biased toward low complexity: residues 105–157 (AEPA…QAEP), 167–181 (AAPAQAVAEPVEPAK), and 216–252 (PSAPAESPKSAKAEPAAAPKTTAKPGEIRRAAAPAAP). Over residues 253–264 (DRAREEARRAAE) the composition is skewed to basic and acidic residues. A compositionally biased stretch (gly residues) spans 357 to 366 (RAGGKGGRGG). The tr-type G domain maps to 470–637 (PRAPVVTVMG…NVLLQAEILE (168 aa)). The segment at 479–486 (GHVDHGKT) is G1. GTP is bound at residue 479 to 486 (GHVDHGKT). The tract at residues 504–508 (GITQH) is G2. The interval 525 to 528 (DTPG) is G3. Residues 525–529 (DTPGH) and 579–582 (NKID) contribute to the GTP site. Positions 579-582 (NKID) are G4. A G5 region spans residues 615–617 (SAK).

The protein belongs to the TRAFAC class translation factor GTPase superfamily. Classic translation factor GTPase family. IF-2 subfamily.

The protein localises to the cytoplasm. Its function is as follows. One of the essential components for the initiation of protein synthesis. Protects formylmethionyl-tRNA from spontaneous hydrolysis and promotes its binding to the 30S ribosomal subunits. Also involved in the hydrolysis of GTP during the formation of the 70S ribosomal complex. This is Translation initiation factor IF-2 from Bordetella parapertussis (strain 12822 / ATCC BAA-587 / NCTC 13253).